A 335-amino-acid chain; its full sequence is Ornithine carbamoyltransferase (335 aa).

Residues 56 to 59 (STRT), Q83, R107, and 134 to 137 (HPTQ) each bind carbamoyl phosphate. Residues N168, D232, and 236-237 (SM) each bind L-ornithine. Residues 274–275 (CL) and R320 contribute to the carbamoyl phosphate site.

The protein belongs to the aspartate/ornithine carbamoyltransferase superfamily. OTCase family.

It localises to the cytoplasm. The enzyme catalyses carbamoyl phosphate + L-ornithine = L-citrulline + phosphate + H(+). It participates in amino-acid biosynthesis; L-arginine biosynthesis; L-arginine from L-ornithine and carbamoyl phosphate: step 1/3. In terms of biological role, reversibly catalyzes the transfer of the carbamoyl group from carbamoyl phosphate (CP) to the N(epsilon) atom of ornithine (ORN) to produce L-citrulline. This Yersinia pseudotuberculosis serotype I (strain IP32953) protein is Ornithine carbamoyltransferase.